The sequence spans 611 residues: Protein decapping 5 (611 aa).

Residues K9–P92 form the Sm domain. Disordered stretches follow at residues H111 to L153, G183 to L238, S264 to P301, E318 to K362, Q396 to S455, and F519 to T611. Composition is skewed to polar residues over residues P117 to P140 and N203 to F214. Over residues S264–S281 the composition is skewed to low complexity. 3 stretches are compositionally biased toward polar residues: residues E318 to S330, Q396 to A413, and A424 to N437. Basic residues predominate over residues Y441–G453. The 37-residue stretch at G453 to L489 folds into the DFDF domain. An FFD box motif is present at residues P512 to T527. Positions I528–T547 are enriched in basic and acidic residues. The TFG box motif lies at N534–S554. Over residues G559–R604 the composition is skewed to gly residues.

It belongs to the LSM14 family. Homodimer. Component of the decapping complex. Interacts with DCP1 and DCP2.

The protein resides in the cytoplasm. It localises to the P-body. Its function is as follows. As a component of the decapping complex, involved in the degradation of mRNAs. Promotes P-body formation. Translational repressor. In Arabidopsis thaliana (Mouse-ear cress), this protein is Protein decapping 5 (DCP5).